A 213-amino-acid polypeptide reads, in one-letter code: Kynurenine formamidase (213 aa).

Position 18 (Trp-18) interacts with substrate. The Zn(2+) site is built by His-48, His-52, and Asp-54. His-58 acts as the Proton donor/acceptor in catalysis. Zn(2+)-binding residues include His-160 and Glu-172.

Belongs to the Cyclase 1 superfamily. KynB family. As to quaternary structure, homodimer. The cofactor is Zn(2+).

It carries out the reaction N-formyl-L-kynurenine + H2O = L-kynurenine + formate + H(+). Its pathway is amino-acid degradation; L-tryptophan degradation via kynurenine pathway; L-kynurenine from L-tryptophan: step 2/2. Functionally, catalyzes the hydrolysis of N-formyl-L-kynurenine to L-kynurenine, the second step in the kynurenine pathway of tryptophan degradation. This chain is Kynurenine formamidase, found in Burkholderia pseudomallei (strain 668).